The sequence spans 158 residues: Large ribosomal subunit protein bL17 (158 aa).

Positions 119–158 are disordered; the sequence is APAAAPEAEEKGEKKAAKAPKAEKAPKAEKKPAKKAAKAE. Residues 126 to 158 are compositionally biased toward basic and acidic residues; that stretch reads AEEKGEKKAAKAPKAEKAPKAEKKPAKKAAKAE.

It belongs to the bacterial ribosomal protein bL17 family. Part of the 50S ribosomal subunit. Contacts protein L32.

This Anaeromyxobacter sp. (strain K) protein is Large ribosomal subunit protein bL17.